Reading from the N-terminus, the 491-residue chain is Probable glycine dehydrogenase (decarboxylating) subunit 2 (491 aa).

Lys-273 carries the post-translational modification N6-(pyridoxal phosphate)lysine.

Belongs to the GcvP family. C-terminal subunit subfamily. In terms of assembly, the glycine cleavage system is composed of four proteins: P, T, L and H. In this organism, the P 'protein' is a heterodimer of two subunits. It depends on pyridoxal 5'-phosphate as a cofactor.

The enzyme catalyses N(6)-[(R)-lipoyl]-L-lysyl-[glycine-cleavage complex H protein] + glycine + H(+) = N(6)-[(R)-S(8)-aminomethyldihydrolipoyl]-L-lysyl-[glycine-cleavage complex H protein] + CO2. In terms of biological role, the glycine cleavage system catalyzes the degradation of glycine. The P protein binds the alpha-amino group of glycine through its pyridoxal phosphate cofactor; CO(2) is released and the remaining methylamine moiety is then transferred to the lipoamide cofactor of the H protein. The polypeptide is Probable glycine dehydrogenase (decarboxylating) subunit 2 (Bacillus cytotoxicus (strain DSM 22905 / CIP 110041 / 391-98 / NVH 391-98)).